Consider the following 383-residue polypeptide: MKNICLLGATGSIGEQTLDVLRMHQDQFRLVSMTFGKNAEKAIPLIRTFQPKYIAVGDMDTYQKVKEASFSHECQIGIGEEGLIEAAVMDEVDIVVNALLGSVGLIPTLKAIEQKKTIALANKETLVTAGHIVKGHAKRYGVPLLPVDSEHSAIFQALQGEQCKNIERLVITASGGSFRDKTRQELESVTIADALNHPNWSMGAKITIDSATMMNKGLEVIEAHWLFDIPYEQIDVVLHKESIIHSMVEFHDRSVIAQLGNPDMRVPIQYALTYPDRLPLPETKRLELWEIGSLHFAKADFERFRCLQFAFESGKIGGTMPTVLNAANEEAVAAFLAGRISFLSIEDLIEQALDRHSVIQDPSLADIQEVDKDTRGYVNSILT.

NADPH contacts are provided by T10, G11, S12, I13, G36, K37, N38, and N122. K123 contributes to the 1-deoxy-D-xylulose 5-phosphate binding site. Residue E124 coordinates NADPH. Position 148 (D148) interacts with Mn(2+). Positions 149, 150, 174, and 197 each coordinate 1-deoxy-D-xylulose 5-phosphate. Position 150 (E150) interacts with Mn(2+). G203 is an NADPH binding site. 1-deoxy-D-xylulose 5-phosphate is bound by residues S210, N215, K216, and E219. A Mn(2+)-binding site is contributed by E219.

It belongs to the DXR family. It depends on Mg(2+) as a cofactor. The cofactor is Mn(2+).

It carries out the reaction 2-C-methyl-D-erythritol 4-phosphate + NADP(+) = 1-deoxy-D-xylulose 5-phosphate + NADPH + H(+). It functions in the pathway isoprenoid biosynthesis; isopentenyl diphosphate biosynthesis via DXP pathway; isopentenyl diphosphate from 1-deoxy-D-xylulose 5-phosphate: step 1/6. In terms of biological role, catalyzes the NADPH-dependent rearrangement and reduction of 1-deoxy-D-xylulose-5-phosphate (DXP) to 2-C-methyl-D-erythritol 4-phosphate (MEP). This is 1-deoxy-D-xylulose 5-phosphate reductoisomerase from Bacillus velezensis (strain DSM 23117 / BGSC 10A6 / LMG 26770 / FZB42) (Bacillus amyloliquefaciens subsp. plantarum).